We begin with the raw amino-acid sequence, 422 residues long: UDP-N-acetylglucosamine 1-carboxyvinyltransferase (422 aa).

Phosphoenolpyruvate is bound at residue 22–23 (KN). Arg-95 is a UDP-N-acetyl-alpha-D-glucosamine binding site. The active-site Proton donor is the Cys-119. Cys-119 carries the post-translational modification 2-(S-cysteinyl)pyruvic acid O-phosphothioketal. UDP-N-acetyl-alpha-D-glucosamine-binding positions include 124 to 128 (RPIDQ), Asp-309, and Val-331.

It belongs to the EPSP synthase family. MurA subfamily.

Its subcellular location is the cytoplasm. It carries out the reaction phosphoenolpyruvate + UDP-N-acetyl-alpha-D-glucosamine = UDP-N-acetyl-3-O-(1-carboxyvinyl)-alpha-D-glucosamine + phosphate. It participates in cell wall biogenesis; peptidoglycan biosynthesis. In terms of biological role, cell wall formation. Adds enolpyruvyl to UDP-N-acetylglucosamine. The polypeptide is UDP-N-acetylglucosamine 1-carboxyvinyltransferase (Anaeromyxobacter dehalogenans (strain 2CP-1 / ATCC BAA-258)).